Reading from the N-terminus, the 1099-residue chain is SLIT-ROBO Rho GTPase-activating protein 3 (1099 aa).

Positions Ala-19–Asp-314 constitute an F-BAR domain. Residues Gln-352 to Thr-392 adopt a coiled-coil conformation. The segment at Gly-470–Pro-493 is disordered. The Rho-GAP domain maps to Gly-506–Phe-694. In terms of domain architecture, SH3 spans Val-744–Met-803. The span at Asp-809–Ser-820 shows a compositional bias: polar residues. Residues Asp-809–Gly-846 are disordered. Ser-817, Ser-820, Ser-821, Ser-837, and Ser-858 each carry phosphoserine. The interval Ala-861–Lys-911 is disordered. Residues His-952 to Ala-987 adopt a coiled-coil conformation. A Phosphoserine modification is found at Ser-954. 2 disordered regions span residues Thr-994–His-1014 and Ala-1045–Met-1099. The segment covering Val-1060 to Ser-1074 has biased composition (low complexity). Over residues Pro-1089–Met-1099 the composition is skewed to polar residues.

Homodimer. Forms a heterooligomer with SRGAP1 and SRGAP2 through its F-BAR domain. Interacts with WASF1. Probably interacts with ROBO1. Interacts with FASLG.

Functionally, GTPase-activating protein for RAC1 and perhaps CDC42, but not for RhoA small GTPase. May attenuate RAC1 signaling in neurons. This is SLIT-ROBO Rho GTPase-activating protein 3 (Srgap3) from Mus musculus (Mouse).